We begin with the raw amino-acid sequence, 159 residues long: Putative transcriptional regulatory protein rrnAC0199 (159 aa).

It belongs to the Tfx family.

In terms of biological role, putative transcriptional regulator. The sequence is that of Putative transcriptional regulatory protein rrnAC0199 from Haloarcula marismortui (strain ATCC 43049 / DSM 3752 / JCM 8966 / VKM B-1809) (Halobacterium marismortui).